The following is a 657-amino-acid chain: L-glutamate oxidase precursor (657 aa).

The signal sequence occupies residues Met1–Arg12. FAD is bound by residues Glu86, Ala87, Arg95, Met120, Arg121, Met350, Glu639, Trp647, and Ile648.

It belongs to the flavin monoamine oxidase family. LGOX subfamily. In terms of assembly, the mature enzyme is a heterohexamer composed of 2 alpha chains, 2 beta chains and 2 gamma chains (alpha2beta2gamma2). FAD serves as cofactor. Post-translationally, the precursor form is proteolytically cleaved by an endopeptidase into alpha, beta and gamma chains, which form the stable mature enzyme.

It is found in the secreted. The catalysed reaction is L-glutamate + O2 + H2O = H2O2 + 2-oxoglutarate + NH4(+). Its activity is regulated as follows. Proteinase K-treated enzyme exhibits improved affinity for the substrate, increased activity and increased thermostability. Catalyzes the oxidative deamination of L-glutamate to 2-ketoglutarate along with the production of ammonia and hydrogen peroxide. Exhibits strict specificity for L-glutamate, and shows only very weak activity with L-glutamine. The sequence is that of L-glutamate oxidase precursor from Streptomyces diastatochromogenes.